The chain runs to 860 residues: MQEQYRPEEIESKVQLHWDEKRTFEVTEDESKEKYYCLSMLPYPSGRLHMGHVRNYTIGDVIARYQRMLGKNVLQPIGWDAFGLPAEGAAVKNNTAPAPWTYDNIAYMKNQLKMLGFGYDWSRELATCTPEYYRWEQKFFTELYKKGLVYKKTSAVNWCPNDQTVLANEQVIDGCCWRCDTKVERKEIPQWFIKITAYADELLNDLDKLDHWPDTVKTMQRNWIGRSEGVEITFNVNNYDNTLTVYTTRPDTFMGCTYLAVAAGHPLAQKAAENNPELAAFIDECRNTKVAEAEMATMEKKGVDTGFKAVHPLTGEEIPVWAANFVLMEYGTGAVMAVPGHDQRDYEFASKYGLNIKPVILAADGSEPDLSQQALTEKGVLFNSGEFNGLDHEAAFNAIADKLTAMGVGERKVNYRLRDWGVSRQRYWGAPIPMVTLEDGTVMPTPDDQLPVILPEDVVMDGITSPIKADPEWAKTTVNGMPALRETDTFDTFMESSWYYARYTCPQYKEGMLDSKAANYWLPVDIYIGGIEHAIMHLLYFRFFHKLMRDAGMVNSDEPAKQLLCQGMVLADAFYYVGENGERNWVSPVDAIVERDEKGRIVKAKDAAGHELVYTGMSKMSKSKNNGIDPQVMVERYGADTVRLFMMFASPADMTLEWQESGVEGANRFLKRVWKLVYEHTAKGDVATLNVDALTEDQKALRRDVHKTIAKVTDDIGRRQTFNTAIAAIMELMNKLAKAPTDGEQDRALMQEALLAVVRMLNPFTPHICFTLWQELKGEGDIDNAPWPVADEKAMVEDSTLVVVQVNGKVRAKITVPVDATEEQVRERAGQEHLVAKYLDGVTVRKVIYVPGKLLNLVVG.

The 'HIGH' region motif lies at 42 to 52 (PYPSGRLHMGH). Residues 619–623 (KMSKS) carry the 'KMSKS' region motif. Lysine 622 serves as a coordination point for ATP.

This sequence belongs to the class-I aminoacyl-tRNA synthetase family.

It localises to the cytoplasm. It catalyses the reaction tRNA(Leu) + L-leucine + ATP = L-leucyl-tRNA(Leu) + AMP + diphosphate. The protein is Leucine--tRNA ligase of Escherichia coli O9:H4 (strain HS).